Here is a 180-residue protein sequence, read N- to C-terminus: ATP-dependent protease subunit HslV (180 aa).

The active site involves Thr7. The Na(+) site is built by Ala165, Cys168, and Thr171.

This sequence belongs to the peptidase T1B family. HslV subfamily. As to quaternary structure, a double ring-shaped homohexamer of HslV is capped on each side by a ring-shaped HslU homohexamer. The assembly of the HslU/HslV complex is dependent on binding of ATP.

The protein localises to the cytoplasm. The enzyme catalyses ATP-dependent cleavage of peptide bonds with broad specificity.. Its activity is regulated as follows. Allosterically activated by HslU binding. Functionally, protease subunit of a proteasome-like degradation complex believed to be a general protein degrading machinery. This is ATP-dependent protease subunit HslV from Geobacillus sp. (strain WCH70).